A 101-amino-acid polypeptide reads, in one-letter code: Large ribosomal subunit protein uL23 (101 aa).

Belongs to the universal ribosomal protein uL23 family. As to quaternary structure, part of the 50S ribosomal subunit. Contacts protein L29, and trigger factor when it is bound to the ribosome.

Its function is as follows. One of the early assembly proteins it binds 23S rRNA. One of the proteins that surrounds the polypeptide exit tunnel on the outside of the ribosome. Forms the main docking site for trigger factor binding to the ribosome. This chain is Large ribosomal subunit protein uL23, found in Micrococcus luteus (strain ATCC 4698 / DSM 20030 / JCM 1464 / CCM 169 / CCUG 5858 / IAM 1056 / NBRC 3333 / NCIMB 9278 / NCTC 2665 / VKM Ac-2230) (Micrococcus lysodeikticus).